Reading from the N-terminus, the 142-residue chain is Putative mating-type transcription factor (142 aa).

The protein localises to the nucleus. This chain is Putative mating-type transcription factor, found in Eremothecium gossypii (strain ATCC 10895 / CBS 109.51 / FGSC 9923 / NRRL Y-1056) (Yeast).